Reading from the N-terminus, the 474-residue chain is tRNA-2-methylthio-N(6)-dimethylallyladenosine synthase (474 aa).

The region spanning Lys3–Ala120 is the MTTase N-terminal domain. [4Fe-4S] cluster-binding residues include Cys12, Cys49, Cys83, Cys157, Cys161, and Cys164. Residues Arg143–Arg375 enclose the Radical SAM core domain. The TRAM domain maps to Arg378–Arg441.

It belongs to the methylthiotransferase family. MiaB subfamily. In terms of assembly, monomer. The cofactor is [4Fe-4S] cluster.

It is found in the cytoplasm. The catalysed reaction is N(6)-dimethylallyladenosine(37) in tRNA + (sulfur carrier)-SH + AH2 + 2 S-adenosyl-L-methionine = 2-methylsulfanyl-N(6)-dimethylallyladenosine(37) in tRNA + (sulfur carrier)-H + 5'-deoxyadenosine + L-methionine + A + S-adenosyl-L-homocysteine + 2 H(+). In terms of biological role, catalyzes the methylthiolation of N6-(dimethylallyl)adenosine (i(6)A), leading to the formation of 2-methylthio-N6-(dimethylallyl)adenosine (ms(2)i(6)A) at position 37 in tRNAs that read codons beginning with uridine. The chain is tRNA-2-methylthio-N(6)-dimethylallyladenosine synthase from Shewanella woodyi (strain ATCC 51908 / MS32).